The primary structure comprises 249 residues: DNA polymerase sliding clamp 1 (249 aa).

The protein belongs to the PCNA family. As to quaternary structure, forms heterodimers with PCNA2, which then recruit PCNA3; does not form homotrimers. The heterodimers interact with RfcS homotetramers. Heterotrimer which circularizes head-to-tail (head is at N-terminus, tail is at C-terminus) to form a toroid; DNA passes through its center. Replication factor C (RFC) is required to load the toroid on the DNA. Heterotrimer interacts, probably via this subunit, with flap endonuclease 1 (fen), Hjc, Dpo4, and XPF.

In terms of biological role, one of the sliding clamp subunits that acts as a moving platform for DNA processing. Responsible for tethering the catalytic subunit of DNA polymerase to DNA during high-speed replication. Heterotrimer stimulates the Holliday junction resolvase Hjc. DNA polymerase I, DNA ligase and the flap endonuclease may be constitutively associated with the PCNA heterotrimer forming a scanning complex able to couple DNA synthesis and Okazaki fragment maturation. This is DNA polymerase sliding clamp 1 from Saccharolobus solfataricus (strain ATCC 35092 / DSM 1617 / JCM 11322 / P2) (Sulfolobus solfataricus).